Reading from the N-terminus, the 314-residue chain is Ribosomal RNA small subunit methyltransferase H (314 aa).

Residues 36 to 38 (GGH), Asp-56, Phe-82, Asp-104, and Gln-111 contribute to the S-adenosyl-L-methionine site.

It belongs to the methyltransferase superfamily. RsmH family.

It is found in the cytoplasm. The catalysed reaction is cytidine(1402) in 16S rRNA + S-adenosyl-L-methionine = N(4)-methylcytidine(1402) in 16S rRNA + S-adenosyl-L-homocysteine + H(+). Functionally, specifically methylates the N4 position of cytidine in position 1402 (C1402) of 16S rRNA. The sequence is that of Ribosomal RNA small subunit methyltransferase H from Ectopseudomonas mendocina (strain ymp) (Pseudomonas mendocina).